Consider the following 75-residue polypeptide: Mating pheromone Er-1/Er-3 (75 aa).

The N-terminal stretch at 1 to 19 (MNKLAILAIIAMVLFSANA) is a signal peptide. Positions 20-35 (FRFQSRLRSNVEAKTG) are excised as a propeptide. 3 disulfides stabilise this stretch: Cys-38–Cys-54, Cys-45–Cys-71, and Cys-50–Cys-63.

As to quaternary structure, homodimer.

It is found in the secreted. The protein resides in the cell membrane. Mating ciliate pheromones (or gamones) are diffusible extracellular communication signals that distinguish different intraspecific classes of cells commonly referred to as 'mating types'. They prepare the latter for conjugation by changing their cell surface properties. The membrane-bound form promotes inter-cellular communication and adhesion for mating pair formation and may act as binding site for the secreted form. The protein is Mating pheromone Er-1/Er-3 (MAT1) of Euplotes raikovi.